Reading from the N-terminus, the 147-residue chain is Large ribosomal subunit protein bL9 (147 aa).

Belongs to the bacterial ribosomal protein bL9 family.

Binds to the 23S rRNA. The protein is Large ribosomal subunit protein bL9 of Trichlorobacter lovleyi (strain ATCC BAA-1151 / DSM 17278 / SZ) (Geobacter lovleyi).